The sequence spans 336 residues: MEEAAAASNGGLLYHEVQEGKLCAVHCVNTTLQGPFFSEFDLSALAVDLDQRERQVMSEGAAGAATTAAGDFLAEGEGSHNVSLGGDFSIQVLQKALEVWDLQVIPLDSPDVGSCLFDPELETAFICHLQDHWFCIRKVNGEWYNFNSLYPAPEHLSKFYLSAFIDTLKGSGWSIFAVRGNFPKECPMATEGSNGFGQWLTPDDARRITSSCNQVQTPTQQAGVSLVADQSEEMSEMDMIAAQQEEADLNAAIAASLMDTGGPFANYAAHEESRSQDAFAIESTSGEMSKDGNLEEQGANKSETSEPNSDNIESASGSNPKQNTTSLEGKESIKED.

Residues 10–193 enclose the Josephin domain; it reads GGLLYHEVQE…KECPMATEGS (184 aa). Residue Cys23 is the Nucleophile of the active site. His132 serves as the catalytic Proton acceptor. The active site involves Asn147. The UIM domain occupies 244 to 263; the sequence is QEEADLNAAIAASLMDTGGP. Positions 281 to 336 are disordered; sequence IESTSGEMSKDGNLEEQGANKSETSEPNSDNIESASGSNPKQNTTSLEGKESIKED. Residues 299 to 327 are compositionally biased toward polar residues; the sequence is ANKSETSEPNSDNIESASGSNPKQNTTSL.

Its subcellular location is the nucleus. The catalysed reaction is Thiol-dependent hydrolysis of ester, thioester, amide, peptide and isopeptide bonds formed by the C-terminal Gly of ubiquitin (a 76-residue protein attached to proteins as an intracellular targeting signal).. In terms of biological role, interacts with key regulators of transcription and represses transcription. Acts as a histone-binding protein that regulates transcription. Acts as a deubiquitinating enzyme. The chain is Putative ataxin-3 homolog from Oryza sativa subsp. japonica (Rice).